The chain runs to 149 residues: MSAKSRILVLNGPNLNLLGLREPTHYGNNTLAQIVDALTEQAHNAGVELEHLQSNREYELIEAIHAAYGKIDFIIINPAAFTHTSVALRDALLGVAIPFIEVHLSNVHAREPFRHHSYLSDKAEGVICGLGAQGYEFALSAAINKLQAK.

Tyrosine 26 serves as the catalytic Proton acceptor. Substrate is bound by residues asparagine 77, histidine 83, and aspartate 90. Catalysis depends on histidine 103, which acts as the Proton donor. Substrate is bound by residues 104–105 (LS) and arginine 114.

Belongs to the type-II 3-dehydroquinase family. Homododecamer.

It carries out the reaction 3-dehydroquinate = 3-dehydroshikimate + H2O. Its pathway is metabolic intermediate biosynthesis; chorismate biosynthesis; chorismate from D-erythrose 4-phosphate and phosphoenolpyruvate: step 3/7. In terms of biological role, catalyzes a trans-dehydration via an enolate intermediate. The sequence is that of 3-dehydroquinate dehydratase from Vibrio parahaemolyticus serotype O3:K6 (strain RIMD 2210633).